Consider the following 269-residue polypeptide: Activator of basal transcription 1 (269 aa).

A disordered region spans residues 1-40 (MVKAGELVEQQKAAMEEEANAEAAEDQEEPEDTACSSSSK). The stretch at 5 to 29 (GELVEQQKAAMEEEANAEAAEDQEE) forms a coiled coil. A compositionally biased stretch (acidic residues) spans 16 to 32 (EEEANAEAAEDQEEPED). Residues 48-145 (GIVYLGHVPP…RKRSPFRYDL (98 aa)) enclose the RRM domain. A coiled-coil region spans residues 164 to 194 (AFERQVRRQRLRAEVAQAKRETDFYLRNVEQ). Residues 220–244 (EQEFRARKAARPGGRERARLANVED) form a disordered region.

This sequence belongs to the ESF2/ABP1 family. Interacts with ESF1/ABTAP. Interacts with IGHMBP2. Ubiquitously expressed.

The protein resides in the nucleus. It localises to the nucleolus. Could be a novel TATA-binding protein (TBP) which can function as a basal transcription activator. Can act as a regulator of basal transcription for class II genes. In Mus musculus (Mouse), this protein is Activator of basal transcription 1 (Abt1).